Consider the following 451-residue polypeptide: Molybdate-anion transporter (451 aa).

12 helical membrane passes run 1-21, 45-65, 79-99, 130-150, 180-200, 201-221, 251-271, 281-301, 316-336, 346-366, 378-398, and 410-430; these read MLVT…VLEF, YDFY…GPYL, IAII…VSVP, FVLM…FSCF, NGGI…WLGL, GPAS…VLVI, VLLL…FIFL, APLG…SSLY, VLCL…FSTA, LLAF…MRFL, GVLN…LLVL, and MFSL…SLFT.

This sequence belongs to the major facilitator superfamily.

The protein resides in the cell membrane. In terms of biological role, mediates high-affinity intracellular uptake of the rare oligo-element molybdenum. This chain is Molybdate-anion transporter (mfsd5), found in Xenopus laevis (African clawed frog).